We begin with the raw amino-acid sequence, 73 residues long: Small ribosomal subunit protein bS18 (73 aa).

The protein belongs to the bacterial ribosomal protein bS18 family. As to quaternary structure, part of the 30S ribosomal subunit. Forms a tight heterodimer with protein bS6.

Binds as a heterodimer with protein bS6 to the central domain of the 16S rRNA, where it helps stabilize the platform of the 30S subunit. The polypeptide is Small ribosomal subunit protein bS18 (Prochlorococcus marinus (strain NATL2A)).